Reading from the N-terminus, the 1227-residue chain is MANGVIPPPGGPSPLPQVRVPLEEPPLGPDVEEEDDDLGKTLAVSRFGDLISKTPAWDPEKPSRSYSERDFEFHRHTSHHTHHPLSARLPPPHKLRRLPPTSARHARRKRKKEKTSAPPSEGTPPIQEEGGAGAEEEEEEEEEEEGESEAEPVEPPPPGPPQKAKFSIGSDEDDSPGLSIKAPCAKALPSVGLPSDQSPQRSGSSPSPRARASRISTEKSRPWSPSASYDLRERLCPGSALGNPGPEQRVPTDEAEAQMLGSADLDDMKSHRLEDNPGVRRHLVKKPSRIQGGRGSPSGLAPILRRKKKKKKLDRRPHEVFVELNELMLDRSQEPHWRETARWIKFEEDVEEETERWGKPHVASLSFRSLLELRRTIAQGAALLDLEQTTLPGIAHLVVETMIVSDQIRPEDRASVLRTLLLKHSHPNDDKDSGFFPRNPSSSSVNSVLGNHHPTPSHGPDGAVPTMADDLGEPAPLWPHDPDAKEKPLHMPGGDGHRGKSLKLLEKIPEDAEATVVLVGSVPFLEQPAAAFVRLSEAVLLESVLEVPVPVRFLFVMLGPSHTSTDYHELGRSIATLMSDKLFHEAAYQADDRQDLLGAISEFLDGSIVIPPSEVEGRDLLRSVAAFQRELLRKRREREQTKVEMTTRGGYVAPGKELSLEMGGSEATSEDDPLQRTGSVFGGLVRDVKRRYPHYPSDLRDALHSQCVAAVLFIYFAALSPAITFGGLLGEKTEGLMGVSELIVSTAVLGVLFSLLGAQPLLVVGFSGPLLVFEEAFFKFCRAQDLEYLTGRVWVGLWLVVFVLALVAAEGSFLVRYISPFTQEIFAFLISLIFIYETFHKLYKVFTEHPLLPFYPPEEALEPGLELNSSALPPTEGPPGPRNQPNTALLSLILMLGTFLIAFFLRKFRNSRFLGGKARRVIGDFGIPISILVMVLVDYSITDTYTQKLTVPTGLSVTSPHKRTWFIPPLGSARPFPPWMMVAAAVPALLVLILIFMETQITALIVSQKARRLLKGSGFHLDLLLIGSLGGLCGLFGLPWLTAATVRSVTHVNALTVMRTAIAPGDKPQIQEVREQRVTGVLIASLVGLSIVMGAVLRRIPLAVLFGIFLYMGVTSLSGIQLSQRLLLIFMPAKHHPEQPYVTKVKTWRMHLFTFIQLGCIALLWVVKSTVASLAFPFLLLLTVPLRRCLLPRLFQDRELQALDSEDAEPNFDEDGQDEYNELHMPV.

The span at 1 to 15 (MANGVIPPPGGPSPL) shows a compositional bias: pro residues. Disordered stretches follow at residues 1–255 (MANG…TDEA), 286–312 (KPSR…KKKK), and 428–497 (NDDK…GDGH). Residues 1–707 (MANGVIPPPG…DLRDALHSQC (707 aa)) lie on the Cytoplasmic side of the membrane. Basic and acidic residues predominate over residues 58–75 (DPEKPSRSYSERDFEFHR). Basic residues-rich tracts occupy residues 76–97 (HTSH…KLRR) and 104–113 (RHARRKRKKE). The segment covering 134-152 (AEEEEEEEEEEEGESEAEP) has biased composition (acidic residues). 4 positions are modified to phosphoserine: Ser167, Ser170, Ser175, and Ser198. A compositionally biased stretch (low complexity) spans 194–215 (PSDQSPQRSGSSPSPRARASRI). Arg294 is subject to Omega-N-methylarginine. Over residues 435 to 448 (FFPRNPSSSSVNSV) the composition is skewed to low complexity. A compositionally biased stretch (basic and acidic residues) spans 480–497 (HDPDAKEKPLHMPGGDGH). Transmembrane regions (helical) follow at residues 708–730 (VAAV…GLLG), 736–773 (LMGV…LLVF), 793–815 (VWVG…SFLV), and 825–846 (IFAF…YKVF). The membrane (anion exchange) stretch occupies residues 708-1227 (VAAVLFIYFA…DEYNELHMPV (520 aa)). Asn868 is a glycosylation site (N-linked (GlcNAc...) asparagine). A helical transmembrane segment spans residues 888-905 (ALLSLILMLGTFLIAFFL). The Cytoplasmic portion of the chain corresponds to 906-920 (RKFRNSRFLGGKARR). 5 consecutive transmembrane segments (helical) span residues 921–941 (VIGD…DYSI), 975–997 (PFPP…LIFM), 1023–1044 (LLLI…LTAA), 1078–1123 (VTGV…IQLS), and 1150–1186 (MHLF…TVPL). A lipid anchor (S-palmitoyl cysteine) is attached at Cys1160.

Belongs to the anion exchanger (TC 2.A.31) family. As to expression, expressed in the brain and heart.

It is found in the cell membrane. The catalysed reaction is hydrogencarbonate(in) + chloride(out) = hydrogencarbonate(out) + chloride(in). In terms of biological role, sodium-independent anion exchanger which mediates the electroneutral exchange of chloride for bicarbonate ions across the cell membrane. May be involved in the regulation of intracellular pH, and the modulation of cardiac action potential. The protein is Anion exchange protein 3 (Slc4a3) of Rattus norvegicus (Rat).